Consider the following 523-residue polypeptide: Lysine--tRNA ligase (523 aa).

Residues 30 to 38 (PSGYVHVGN) carry the 'HIGH' region motif. Residues Asp95, Cys99, His100, His106, Cys177, His180, Cys199, and His203 each contribute to the Zn(2+) site. Positions 279 to 283 (KMSGS) match the 'KMSKS' region motif.

Belongs to the class-I aminoacyl-tRNA synthetase family. Zn(2+) serves as cofactor.

The protein resides in the cytoplasm. The catalysed reaction is tRNA(Lys) + L-lysine + ATP = L-lysyl-tRNA(Lys) + AMP + diphosphate. The polypeptide is Lysine--tRNA ligase (lysS) (Pyrococcus horikoshii (strain ATCC 700860 / DSM 12428 / JCM 9974 / NBRC 100139 / OT-3)).